Reading from the N-terminus, the 316-residue chain is tRNA dimethylallyltransferase (316 aa).

23-30 is an ATP binding site; the sequence is GPTASGKS. A substrate-binding site is contributed by 25–30; the sequence is TASGKS. The interaction with substrate tRNA stretch occupies residues 48–51; the sequence is DSMQ.

This sequence belongs to the IPP transferase family. Monomer. The cofactor is Mg(2+).

The catalysed reaction is adenosine(37) in tRNA + dimethylallyl diphosphate = N(6)-dimethylallyladenosine(37) in tRNA + diphosphate. Catalyzes the transfer of a dimethylallyl group onto the adenine at position 37 in tRNAs that read codons beginning with uridine, leading to the formation of N6-(dimethylallyl)adenosine (i(6)A). The sequence is that of tRNA dimethylallyltransferase from Rhodopseudomonas palustris (strain BisB18).